An 834-amino-acid chain; its full sequence is DNA gyrase subunit A (834 aa).

A Topo IIA-type catalytic domain is found at L34–I500. Residue Y122 is the O-(5'-phospho-DNA)-tyrosine intermediate of the active site. A GyrA-box motif is present at residues Q527–G533. Residues L810 to R834 are disordered. Over residues E814–S828 the composition is skewed to acidic residues.

It belongs to the type II topoisomerase GyrA/ParC subunit family. As to quaternary structure, heterotetramer, composed of two GyrA and two GyrB chains. In the heterotetramer, GyrA contains the active site tyrosine that forms a transient covalent intermediate with DNA, while GyrB binds cofactors and catalyzes ATP hydrolysis.

It localises to the cytoplasm. The catalysed reaction is ATP-dependent breakage, passage and rejoining of double-stranded DNA.. Its function is as follows. A type II topoisomerase that negatively supercoils closed circular double-stranded (ds) DNA in an ATP-dependent manner to modulate DNA topology and maintain chromosomes in an underwound state. Negative supercoiling favors strand separation, and DNA replication, transcription, recombination and repair, all of which involve strand separation. Also able to catalyze the interconversion of other topological isomers of dsDNA rings, including catenanes and knotted rings. Type II topoisomerases break and join 2 DNA strands simultaneously in an ATP-dependent manner. In Chlamydia pneumoniae (Chlamydophila pneumoniae), this protein is DNA gyrase subunit A.